Here is a 349-residue protein sequence, read N- to C-terminus: Aspartate-semialdehyde dehydrogenase (349 aa).

NADP(+) contacts are provided by residues 12-15 (TGSV) and 39-40 (NS). Arginine 113 provides a ligand contact to phosphate. The active-site Acyl-thioester intermediate is cysteine 148. Glutamine 175 provides a ligand contact to substrate. NADP(+) is bound at residue 178–179 (SG). A substrate-binding site is contributed by glutamate 201. Position 204 (lysine 204) interacts with phosphate. Arginine 234 contributes to the substrate binding site. Histidine 241 acts as the Proton acceptor in catalysis. Position 326 to 327 (326 to 327 (NT)) interacts with NADP(+).

The protein belongs to the aspartate-semialdehyde dehydrogenase family. In terms of assembly, homodimer.

The enzyme catalyses L-aspartate 4-semialdehyde + phosphate + NADP(+) = 4-phospho-L-aspartate + NADPH + H(+). It functions in the pathway amino-acid biosynthesis; L-lysine biosynthesis via DAP pathway; (S)-tetrahydrodipicolinate from L-aspartate: step 2/4. Its pathway is amino-acid biosynthesis; L-methionine biosynthesis via de novo pathway; L-homoserine from L-aspartate: step 2/3. It participates in amino-acid biosynthesis; L-threonine biosynthesis; L-threonine from L-aspartate: step 2/5. In terms of biological role, catalyzes the NADPH-dependent formation of L-aspartate-semialdehyde (L-ASA) by the reductive dephosphorylation of L-aspartyl-4-phosphate. The sequence is that of Aspartate-semialdehyde dehydrogenase from Leptospira interrogans serogroup Icterohaemorrhagiae serovar copenhageni (strain Fiocruz L1-130).